We begin with the raw amino-acid sequence, 912 residues long: MAKSENSTTSTFSSFANKIQPSNDAESDPDSYALEKFKLYETRARFYLVGSDRNKRFFRVLKIDRSEPSELNISEDPVVYSPQEIKSLLQRIAEGNRATGGLAFVAKVYGIAGCAKFMESYYLVLVTKRRQIGCICGHAIYAIDESQMISVPHATIQSDVANSKTELRYKKLLSSVDLTKDFFYSYTYPIMQSLQKNVLSSGEEGMPYDNIFVWNSYLTQPIRSRCNNTIWTLALVHGHFKQIRLSIYGRDFSVTLVSRRSRHFAGTRYLKRGVNDRGRVANDVETEQLVLDDEAGSCKGKMSSVVQMRGSIPLFWSQEASRFSPKPDIFLQRYDPTYESTKMHFEDLVNRYGNPIIVLNLIKTVEKRPREMVLRREFANAVGYLNSIFREENHLKFIHWDFHKFAKSKSANVLAVLGAVASEALDLTGLYFSGKPKIVKKKASQLSHANTAREPSLRDLRAYSAELSRGESANDILSALANREKEMKLTQQKKDEGTNSSAPRYQSGVLRTNCIDCLDRTNVAQYAYGLAALGRQLHAMGLSDTPKIDPDSSIAAALMDMYQSMGDALAQQYGGSAAHNTVFPERQGKWKATTQSREFLKSIKRYYSNTYTDGEKQDAINLFLGYFQPQEGKPALWELDSDYYLHVSGIGDDIFPDIGVQSIAKPMSGIGVNLAPVPAFRDDFSRKKLTSFDKLIEQTCSSIKNVRLCSETDQRPGGNTGSTGVAPDAAEIQLKSPNWLFGSRKPEESSSATKSGADDSEKGVTSTERVNDFCNLDWLSKSDRHQGDIFQRYLSITSTNEANGWYGGTLLGDQDENSEIYRHYAQFCQCPAMEPFENDHEFEQNFAEVLRMNTIDVMDIEEEETEMESDFNEYTQIGSDLGIIPMQCKHFASDPCWLARWLVGDDKVPKVI.

The interval 1-29 (MAKSENSTTSTFSSFANKIQPSNDAESDP) is disordered. Residues 173 to 575 (LSSVDLTKDF…GDALAQQYGG (403 aa)) enclose the SAC domain. Positions 511–522 (RTNCIDCLDRTN) match the Phosphatase catalytic core motif. The interval 715 to 912 (RPGGNTGSTG…VGDDKVPKVI (198 aa)) is required for subcellular localization. Residues 740 to 766 (LFGSRKPEESSSATKSGADDSEKGVTS) are disordered.

As to quaternary structure, component of the PI(3,5)P2 regulatory complex at least composed of ATG18, SAC/FIG4, FAB1 and VAC14. Requires Mg(2+) as cofactor. As to expression, ubiquitous with higher expression level in both young elongating and nonelongating stems. Detected in vascular tissues.

It is found in the vacuole membrane. Its subcellular location is the golgi apparatus. It catalyses the reaction a 1,2-diacyl-sn-glycero-3-phospho-(1D-myo-inositol-3-phosphate) + H2O = a 1,2-diacyl-sn-glycero-3-phospho-(1D-myo-inositol) + phosphate. The enzyme catalyses a 1,2-diacyl-sn-glycero-3-phospho-(1D-myo-inositol-3,5-bisphosphate) + H2O = a 1,2-diacyl-sn-glycero-3-phospho-(1D-myo-inositol-3-phosphate) + phosphate. It carries out the reaction a 1,2-diacyl-sn-glycero-3-phospho-(1D-myo-inositol 4-phosphate) + H2O = a 1,2-diacyl-sn-glycero-3-phospho-(1D-myo-inositol) + phosphate. Functionally, phosphoinositide phosphatase which catalyzes the hydrolysis of phosphatidylinositol-3,5-bisphosphate (PtdIns(3,5)P2). Can also catalyze the hydrolysis of phosphatidylinositol 3-phosphate (PtdIns(3)P) and phosphatidylinositol 4-phosphate (PtdIns(4)P). Required for normal cell morphogenesis, cell wall synthesis, and actin organization. The polypeptide is Phosphatidylinositol-3-phosphatase SAC1 (SAC1) (Arabidopsis thaliana (Mouse-ear cress)).